A 245-amino-acid polypeptide reads, in one-letter code: Geranylgeranylglyceryl phosphate synthase (245 aa).

2 residues coordinate Mg(2+): D22 and S51. Sn-glycerol 1-phosphate-binding positions include 169–175 (YLEAGSG), 200–201 (GG), and 222–223 (GT).

This sequence belongs to the GGGP/HepGP synthase family. Group II subfamily. Homopentamer. Requires Mg(2+) as cofactor.

It is found in the cytoplasm. It carries out the reaction sn-glycerol 1-phosphate + (2E,6E,10E)-geranylgeranyl diphosphate = sn-3-O-(geranylgeranyl)glycerol 1-phosphate + diphosphate. Its pathway is membrane lipid metabolism; glycerophospholipid metabolism. Inhibited by EDTA in vitro. Prenyltransferase that catalyzes the transfer of the geranylgeranyl moiety of geranylgeranyl diphosphate (GGPP) to the C3 hydroxyl of sn-glycerol-1-phosphate (G1P). This reaction is the first ether-bond-formation step in the biosynthesis of archaeal membrane lipids. Cannot use sn-glycerol-3-phosphate (G3P) or dihydroxyacetonephosphate (DHAP) as substrate. The protein is Geranylgeranylglyceryl phosphate synthase of Methanothermobacter marburgensis (strain ATCC BAA-927 / DSM 2133 / JCM 14651 / NBRC 100331 / OCM 82 / Marburg) (Methanobacterium thermoautotrophicum).